We begin with the raw amino-acid sequence, 855 residues long: Valine--tRNA ligase (855 aa).

Residues Pro44–His54 carry the 'HIGH' region motif. The 'KMSKS' region motif lies at Lys524–Thr528. Lys527 is an ATP binding site. The stretch at Lys797–Val827 forms a coiled coil.

This sequence belongs to the class-I aminoacyl-tRNA synthetase family. ValS type 1 subfamily. As to quaternary structure, monomer.

The protein resides in the cytoplasm. The enzyme catalyses tRNA(Val) + L-valine + ATP = L-valyl-tRNA(Val) + AMP + diphosphate. Functionally, catalyzes the attachment of valine to tRNA(Val). As ValRS can inadvertently accommodate and process structurally similar amino acids such as threonine, to avoid such errors, it has a 'posttransfer' editing activity that hydrolyzes mischarged Thr-tRNA(Val) in a tRNA-dependent manner. The polypeptide is Valine--tRNA ligase (Solibacter usitatus (strain Ellin6076)).